Reading from the N-terminus, the 533-residue chain is Atypical kinase COQ8B, mitochondrial (533 aa).

The helical transmembrane segment at 93 to 109 (LASFGGLAVGLGLGALA) threads the bilayer. Residues 156–159 (KIGQ) carry the KxGQ motif motif. The region spanning 192 to 424 (MMRVLEEELG…DRVLQKSQDL (233 aa)) is the Protein kinase domain. Residues 217-220 (AAAS) carry the AAAS motif motif. Residues serine 220, lysine 238, and 325-328 (MELA) contribute to the ATP site. Aspartate 368 (proton acceptor) is an active-site residue. The ATP site is built by asparagine 373 and aspartate 387.

The protein belongs to the protein kinase superfamily. ADCK protein kinase family. In terms of assembly, homodimer; homodimerizes via its transmembrane region. Interacts with COQ6 and COQ7. Interacts with the multi-subunit COQ enzyme complex, composed of at least COQ3, COQ4, COQ5, COQ6, COQ7 and COQ9.

Its subcellular location is the mitochondrion membrane. The protein localises to the cytoplasm. The protein resides in the cytosol. It is found in the cell membrane. It participates in cofactor biosynthesis; ubiquinone biosynthesis. Functionally, atypical kinase involved in the biosynthesis of coenzyme Q, also named ubiquinone, an essential lipid-soluble electron transporter for aerobic cellular respiration. Its substrate specificity is still unclear: may act as a protein kinase that mediates phosphorylation of COQ3. According to other reports, acts as a small molecule kinase, possibly a lipid kinase that phosphorylates a prenyl lipid in the ubiquinone biosynthesis pathway, as suggested by its ability to bind coenzyme Q lipid intermediates. However, the small molecule kinase activity was not confirmed by another publication. Required for podocyte migration. The chain is Atypical kinase COQ8B, mitochondrial from Mus musculus (Mouse).